Here is a 66-residue protein sequence, read N- to C-terminus: DNA gyrase inhibitor YacG (66 aa).

Residues Cys9, Cys12, Cys28, and Cys32 each contribute to the Zn(2+) site.

It belongs to the DNA gyrase inhibitor YacG family. In terms of assembly, interacts with GyrB. Requires Zn(2+) as cofactor.

Its function is as follows. Inhibits all the catalytic activities of DNA gyrase by preventing its interaction with DNA. Acts by binding directly to the C-terminal domain of GyrB, which probably disrupts DNA binding by the gyrase. This chain is DNA gyrase inhibitor YacG, found in Pseudomonas fluorescens (strain SBW25).